The following is a 177-amino-acid chain: Bifunctional protein PyrR (177 aa).

Positions Val-99–Thr-111 match the PRPP-binding motif.

The protein belongs to the purine/pyrimidine phosphoribosyltransferase family. PyrR subfamily.

It carries out the reaction UMP + diphosphate = 5-phospho-alpha-D-ribose 1-diphosphate + uracil. Its function is as follows. Regulates the transcription of the pyrimidine nucleotide (pyr) operon in response to exogenous pyrimidines. Functionally, also displays a weak uracil phosphoribosyltransferase activity which is not physiologically significant. The polypeptide is Bifunctional protein PyrR (Akkermansia muciniphila (strain ATCC BAA-835 / DSM 22959 / JCM 33894 / BCRC 81048 / CCUG 64013 / CIP 107961 / Muc)).